The primary structure comprises 222 residues: Protein THYLAKOID ASSEMBLY 8, chloroplastic (222 aa).

Residues 1 to 32 (MALSLSQTRPPSLSHSHTLSVIVPKRTFVSIR) constitute a chloroplast transit peptide. PPR repeat units follow at residues 115-149 (DLVLYADIVNALTRNKEFDEIDRLIGEIDGIDQRS) and 150-184 (DDKALAKLIRAVVGAERRESVVRVYTLMRESGWGS).

It belongs to the PPR family. P subfamily.

The protein localises to the plastid. Its subcellular location is the chloroplast thylakoid membrane. Its function is as follows. Essential protein required during embryogenesis. Mediates group II organellar RNA introns splicing (e.g. ycf3-2 and trnA). Binds weakly to specific RNA. Promotes the biogenesis of chloroplast thylakoid membranes. The polypeptide is Protein THYLAKOID ASSEMBLY 8, chloroplastic (Arabidopsis thaliana (Mouse-ear cress)).